The following is a 380-amino-acid chain: Cytochrome b (380 aa).

Transmembrane regions (helical) follow at residues F34–M54, W78–I99, W114–L134, and F179–T199. Positions 84 and 98 each coordinate heme b. 2 residues coordinate heme b: H183 and H197. A ubiquinone is bound at residue H202. Transmembrane regions (helical) follow at residues I227 to S247, L289 to H309, F321 to S341, and F348 to P368.

This sequence belongs to the cytochrome b family. As to quaternary structure, the cytochrome bc1 complex contains 11 subunits: 3 respiratory subunits (MT-CYB, CYC1 and UQCRFS1), 2 core proteins (UQCRC1 and UQCRC2) and 6 low-molecular weight proteins (UQCRH/QCR6, UQCRB/QCR7, UQCRQ/QCR8, UQCR10/QCR9, UQCR11/QCR10 and a cleavage product of UQCRFS1). This cytochrome bc1 complex then forms a dimer. The cofactor is heme b.

The protein localises to the mitochondrion inner membrane. Component of the ubiquinol-cytochrome c reductase complex (complex III or cytochrome b-c1 complex) that is part of the mitochondrial respiratory chain. The b-c1 complex mediates electron transfer from ubiquinol to cytochrome c. Contributes to the generation of a proton gradient across the mitochondrial membrane that is then used for ATP synthesis. In Numida meleagris (Helmeted guineafowl), this protein is Cytochrome b (MT-CYB).